The following is a 50-amino-acid chain: Large ribosomal subunit protein bL32A (50 aa).

Over residues 1–19 (MAVPKRRKSRSNTRHRRSQ) the composition is skewed to basic residues. Residues 1-21 (MAVPKRRKSRSNTRHRRSQWK) form a disordered region.

It belongs to the bacterial ribosomal protein bL32 family.

In Saccharopolyspora erythraea (strain ATCC 11635 / DSM 40517 / JCM 4748 / NBRC 13426 / NCIMB 8594 / NRRL 2338), this protein is Large ribosomal subunit protein bL32A.